The following is a 607-amino-acid chain: Discoidin-inducing complex subunit B (607 aa).

The first 19 residues, 1-19 (MNKKIIILIYLIFIKSIVG), serve as a signal peptide directing secretion. The Extracellular portion of the chain corresponds to 20 to 554 (QNPVWIGGSG…LGTDGISKGS (535 aa)). Residues asparagine 75, asparagine 161, asparagine 215, asparagine 276, asparagine 277, asparagine 307, asparagine 324, asparagine 453, asparagine 477, and asparagine 527 are each glycosylated (N-linked (GlcNAc...) asparagine). The chain crosses the membrane as a helical span at residues 555–575 (LAGISVSMVALACFVSLGVWW). The Cytoplasmic segment spans residues 576–607 (KTSKKNDQRNDSQVLTNFSQNKSDDIDVERKL).

In terms of assembly, forms a complex with psiF/dicA.

The protein resides in the membrane. It localises to the secreted. Its function is as follows. Component of a complex that acts as a quorum sensing protein regulating discoidin gene expression during growth and development. Its function in the complex is unclear as it has no ability to induce discoidin during growth and development by itself. The protein is Discoidin-inducing complex subunit B (dicB) of Dictyostelium discoideum (Social amoeba).